We begin with the raw amino-acid sequence, 22 residues long: Motilin (22 aa).

The span at 1 to 11 (FVPFFTQSDIQ) shows a compositional bias: polar residues. The tract at residues 1 to 22 (FVPFFTQSDIQKMQEKERNKGQ) is disordered. A compositionally biased stretch (basic and acidic residues) spans 12–22 (KMQEKERNKGQ).

The protein belongs to the motilin family.

Its subcellular location is the secreted. Functionally, plays an important role in the regulation of interdigestive gastrointestinal motility and indirectly causes rhythmic contraction of duodenal and colonic smooth muscle. The protein is Motilin (MLN) of Gallus gallus (Chicken).